The primary structure comprises 1331 residues: Receptor-type adenylate cyclase B (1331 aa).

Residues 1–33 (MYADATHPRRACWCGAGGVSGCVRQRHAYRCSR) lie on the Cytoplasmic side of the membrane. The helical transmembrane segment at 34–54 (LLAGVLLIVGALTLTLAVSTV) threads the bilayer. The Extracellular portion of the chain corresponds to 55–898 (PAAWAAGAVA…SHALTPAQRG (844 aa)). Asn255, Asn429, Asn558, Asn574, and Asn657 each carry an N-linked (GlcNAc...) asparagine glycan. Residues 899–919 (GAIAGIALLTVILLAVAGLAL) form a helical membrane-spanning segment. Residues 920–1331 (YCCMDNRNND…PTVCNVRGAH (412 aa)) are Cytoplasmic-facing. The region spanning 940–1094 (TLLFTDIESS…DTSNMAARTE (155 aa)) is the Guanylate cyclase domain. Asp945 and Asp988 together coordinate Mg(2+).

Belongs to the adenylyl cyclase class-3 family. Mg(2+) is required as a cofactor.

Its subcellular location is the membrane. It carries out the reaction ATP = 3',5'-cyclic AMP + diphosphate. Could act as a receptor for an unknown ligand. This chain is Receptor-type adenylate cyclase B (RAC-B), found in Leishmania donovani.